We begin with the raw amino-acid sequence, 371 residues long: DNA replication and repair protein RecF (371 aa).

ATP is bound at residue 30-37 (GENAQGKT).

It belongs to the RecF family.

The protein localises to the cytoplasm. The RecF protein is involved in DNA metabolism; it is required for DNA replication and normal SOS inducibility. RecF binds preferentially to single-stranded, linear DNA. It also seems to bind ATP. This chain is DNA replication and repair protein RecF, found in Lysinibacillus sphaericus (strain C3-41).